A 232-amino-acid polypeptide reads, in one-letter code: Large ribosomal subunit protein uL1 (232 aa).

The protein belongs to the universal ribosomal protein uL1 family. Part of the 50S ribosomal subunit.

Its function is as follows. Binds directly to 23S rRNA. The L1 stalk is quite mobile in the ribosome, and is involved in E site tRNA release. In terms of biological role, protein L1 is also a translational repressor protein, it controls the translation of the L11 operon by binding to its mRNA. This chain is Large ribosomal subunit protein uL1, found in Azorhizobium caulinodans (strain ATCC 43989 / DSM 5975 / JCM 20966 / LMG 6465 / NBRC 14845 / NCIMB 13405 / ORS 571).